The following is an 896-amino-acid chain: Protein translocase subunit SecA (896 aa).

ATP contacts are provided by residues Gln87, 105–109 (GEGKT), and Asp512. The tract at residues 867 to 889 (QEPARSNRVAGRNDPCPCGSGKK) is disordered. Residues Cys882, Cys884, Cys893, and Cys894 each contribute to the Zn(2+) site.

This sequence belongs to the SecA family. As to quaternary structure, monomer and homodimer. Part of the essential Sec protein translocation apparatus which comprises SecA, SecYEG and auxiliary proteins SecDF-YajC and YidC. The cofactor is Zn(2+).

It is found in the cell inner membrane. It localises to the cytoplasm. It carries out the reaction ATP + H2O + cellular proteinSide 1 = ADP + phosphate + cellular proteinSide 2.. In terms of biological role, part of the Sec protein translocase complex. Interacts with the SecYEG preprotein conducting channel. Has a central role in coupling the hydrolysis of ATP to the transfer of proteins into and across the cell membrane, serving as an ATP-driven molecular motor driving the stepwise translocation of polypeptide chains across the membrane. The sequence is that of Protein translocase subunit SecA from Pelobacter propionicus (strain DSM 2379 / NBRC 103807 / OttBd1).